We begin with the raw amino-acid sequence, 445 residues long: Alpha-1,3-mannosyl-glycoprotein 2-beta-N-acetylglucosaminyltransferase (445 aa).

Over 1–6 (MLKKQS) the chain is Cytoplasmic. A helical; Signal-anchor for type II membrane protein membrane pass occupies residues 7 to 29 (AGLVLWGAILFVAWNALLLLFFW). Topologically, residues 30-445 (TRPAPGRPPS…TWEGYDPSWN (416 aa)) are lumenal. Cys113 and Cys143 are disulfide-bonded. Positions 115, 142, 188, and 210 each coordinate substrate. Asp211 serves as a coordination point for Mn(2+). Residues Cys237 and Cys303 are joined by a disulfide bond. The Proton acceptor role is filled by Asp289. Residue Ser320 participates in substrate binding.

It belongs to the glycosyltransferase 13 family. Interacts with MGAT4D. Interacts with BRI3 (isoforms 1 and 2); the interaction with isoform 2 is weaker than with isoform 1. Mn(2+) is required as a cofactor.

Its subcellular location is the golgi apparatus membrane. It localises to the cytoplasm. The protein localises to the perinuclear region. It carries out the reaction N(4)-(alpha-D-Man-(1-&gt;3)-[alpha-D-Man-(1-&gt;3)-[alpha-D-Man-(1-&gt;6)]-alpha-D-Man-(1-&gt;6)]-beta-D-Man-(1-&gt;4)-beta-D-GlcNAc-(1-&gt;4)-beta-D-GlcNAc)-L-asparaginyl-[protein] (N-glucan mannose isomer 5A1,2) + UDP-N-acetyl-alpha-D-glucosamine = N(4)-{beta-D-GlcNAc-(1-&gt;2)-alpha-D-Man-(1-&gt;3)-[alpha-D-Man-(1-&gt;3)-[alpha-D-Man-(1-&gt;6)]-alpha-D-Man-(1-&gt;6)]-beta-D-Man-(1-&gt;4)-beta-D-GlcNAc-(1-&gt;4)-beta-D-GlcNAc}-L-asparaginyl-[protein] + UDP + H(+). The protein operates within protein modification; protein glycosylation. Its function is as follows. Initiates complex N-linked carbohydrate formation. Essential for the conversion of high-mannose to hybrid and complex N-glycans. The polypeptide is Alpha-1,3-mannosyl-glycoprotein 2-beta-N-acetylglucosaminyltransferase (MGAT1) (Homo sapiens (Human)).